Consider the following 216-residue polypeptide: Probable GTP-binding protein EngB (216 aa).

Residues 24-205 enclose the EngB-type G domain; the sequence is ATPEIAFVGR…WARLAALAAE (182 aa). GTP contacts are provided by residues 32–39, 59–63, 86–89, 153–156, and 184–186; these read GRSNVGKS, GRTRA, DLPG, TKTD, and FSA. Mg(2+) is bound by residues serine 39 and threonine 61.

This sequence belongs to the TRAFAC class TrmE-Era-EngA-EngB-Septin-like GTPase superfamily. EngB GTPase family. The cofactor is Mg(2+).

In terms of biological role, necessary for normal cell division and for the maintenance of normal septation. The sequence is that of Probable GTP-binding protein EngB from Anaeromyxobacter dehalogenans (strain 2CP-C).